We begin with the raw amino-acid sequence, 357 residues long: Biotin synthase (357 aa).

Residues 41 to 268 (NEVQISRLLS…KSRVRLSAGR (228 aa)) enclose the Radical SAM core domain. The [4Fe-4S] cluster site is built by Cys56, Cys60, and Cys63. 4 residues coordinate [2Fe-2S] cluster: Cys100, Cys131, Cys191, and Arg263.

Belongs to the radical SAM superfamily. Biotin synthase family. Homodimer. It depends on [4Fe-4S] cluster as a cofactor. The cofactor is [2Fe-2S] cluster.

The enzyme catalyses (4R,5S)-dethiobiotin + (sulfur carrier)-SH + 2 reduced [2Fe-2S]-[ferredoxin] + 2 S-adenosyl-L-methionine = (sulfur carrier)-H + biotin + 2 5'-deoxyadenosine + 2 L-methionine + 2 oxidized [2Fe-2S]-[ferredoxin]. It participates in cofactor biosynthesis; biotin biosynthesis; biotin from 7,8-diaminononanoate: step 2/2. Catalyzes the conversion of dethiobiotin (DTB) to biotin by the insertion of a sulfur atom into dethiobiotin via a radical-based mechanism. This Shewanella denitrificans (strain OS217 / ATCC BAA-1090 / DSM 15013) protein is Biotin synthase.